The chain runs to 460 residues: Bifunctional protein GlmU (460 aa).

Residues 1 to 235 (MALSAAIILA…PLSVEGVNDR (235 aa)) form a pyrophosphorylase region. UDP-N-acetyl-alpha-D-glucosamine-binding positions include 9–12 (LAAG), lysine 23, glutamine 76, and 81–82 (GT). Aspartate 109 is a Mg(2+) binding site. UDP-N-acetyl-alpha-D-glucosamine contacts are provided by glycine 146, glutamate 161, asparagine 176, and asparagine 233. Position 233 (asparagine 233) interacts with Mg(2+). Residues 236–256 (VQLAALAKAHNKRVCEHWMRE) form a linker region. The tract at residues 257-460 (GVTILDPDTT…VEGWKPEWER (204 aa)) is N-acetyltransferase. 2 residues coordinate UDP-N-acetyl-alpha-D-glucosamine: arginine 338 and lysine 356. Residue histidine 368 is the Proton acceptor of the active site. Positions 371 and 382 each coordinate UDP-N-acetyl-alpha-D-glucosamine. Acetyl-CoA is bound by residues 391-392 (NY) and alanine 428.

In the N-terminal section; belongs to the N-acetylglucosamine-1-phosphate uridyltransferase family. The protein in the C-terminal section; belongs to the transferase hexapeptide repeat family. In terms of assembly, homotrimer. Mg(2+) serves as cofactor.

The protein localises to the cytoplasm. The enzyme catalyses alpha-D-glucosamine 1-phosphate + acetyl-CoA = N-acetyl-alpha-D-glucosamine 1-phosphate + CoA + H(+). The catalysed reaction is N-acetyl-alpha-D-glucosamine 1-phosphate + UTP + H(+) = UDP-N-acetyl-alpha-D-glucosamine + diphosphate. It functions in the pathway nucleotide-sugar biosynthesis; UDP-N-acetyl-alpha-D-glucosamine biosynthesis; N-acetyl-alpha-D-glucosamine 1-phosphate from alpha-D-glucosamine 6-phosphate (route II): step 2/2. The protein operates within nucleotide-sugar biosynthesis; UDP-N-acetyl-alpha-D-glucosamine biosynthesis; UDP-N-acetyl-alpha-D-glucosamine from N-acetyl-alpha-D-glucosamine 1-phosphate: step 1/1. It participates in bacterial outer membrane biogenesis; LPS lipid A biosynthesis. Catalyzes the last two sequential reactions in the de novo biosynthetic pathway for UDP-N-acetylglucosamine (UDP-GlcNAc). The C-terminal domain catalyzes the transfer of acetyl group from acetyl coenzyme A to glucosamine-1-phosphate (GlcN-1-P) to produce N-acetylglucosamine-1-phosphate (GlcNAc-1-P), which is converted into UDP-GlcNAc by the transfer of uridine 5-monophosphate (from uridine 5-triphosphate), a reaction catalyzed by the N-terminal domain. This is Bifunctional protein GlmU from Bifidobacterium adolescentis (strain ATCC 15703 / DSM 20083 / NCTC 11814 / E194a).